A 1222-amino-acid chain; its full sequence is MLFNINEKGEPLVISFAPFLSPEAIKYLQENERCSDQSQKRTAQQIEAIYTSGQNILVSASAGSGKTFVMVERILDKILRGVSIDRLFISTFTVKAATELRERIENKLYSQIAQTTDFQMKVYLTEQLQSLCQADIGTMDAFAQKVVSRYGYSIGISSQFRIMQDKAEQDVLKQEVFSKLFSEFMNQKEAPVFRALVKNFSGNCKDTSAFRELVYTCYSFSQSTENPKIWLQENFLSAAKTYQRLEDIPDHDIELLLLAMQDTANQLRDVTDMEDYGQLTKAGSRSAKYTKHLTIIEKLSDWVRDFKCLYGKAGLDRLIRDVTGLIPSGNDVTVSKVKYPVFKTLHQKLKQFRHLETILMYQKDCFPLLEQLQDFVLAFSEAYLAVKIQESAFEFSDIAHFAIKILEENTDIRQSYQQHYHEVMVDEYQDNNHMQERLLTLLSNGHNRFMVGDIKQSIYRFRQADPQIFNQKFRDYQKKPEQGKVILLKENFRSQSEVLNVSNAVFSHLMDESVGDVLYDEQHQLIAGSHAQTVPYLDRRAQLLLYNSDKDDGNAPSDSEGISFSEVTIVAKEIIKLHNDKGVPFEDITLLVSSRTRNDIISHTFNQYGIPIVTDGGQQNYLKSVEVMVMLDTLRTINNPRNDYALVALLRSPMFAFDEDDLARIALQKDNELDKDCLYDKIQRAVIGRGAHPELIHDTLLGKLNVFLKTLKSWRRYAKLGSLYDLIWKIFNDRFYFDFVASQAKAEQAQANLYALALRANQFEKSGYKGLYRFIKMIDKVLETQNDLADVEVAAPKQAVNLMTIHKSKGLQFPYVFILNCDKRFSMTDIHKSFILNRQHGIGIKYLADIKGLLGETTLNSVKVSMETLPYQLNKQELRLATLSEQMRLLYVAMTRAEKKVYFIGKASKSKSQEITDPKKLGKLLPLALREQLLTFQDWLLAIADIFSTEDLYFDVRFIEDSDLTQESVGRLQTPQLLNPDDLKDNRQSETIARALDMLEAVSQLNANYEAAIHLPTVRTPSQLKATYEPLLEPIGVDIIEKSSRSLSDFTLPHFSKKAKVEASHIGSALHQLMQVLPLSKPINQQTLLDALRGIDSNEEVKTALDLKKIESFFCDTSLGQFFQTYQKHLYREAPFAILKLDPISQEEYVLRGIIDAYFLFDDHIVLVDYKTDKYKQPIELKKRYQQQLELYAEALTQTYKLPVTKRYLVLMGGGKPEIVEV.

The UvrD-like helicase ATP-binding domain maps to 39–495; that stretch reads QKRTAQQIEA…ILLKENFRSQ (457 aa). Position 60–67 (60–67) interacts with ATP; that stretch reads ASAGSGKT. The region spanning 524 to 810 is the UvrD-like helicase C-terminal domain; the sequence is QLIAGSHAQT…NLMTIHKSKG (287 aa).

The protein belongs to the helicase family. AddA subfamily. In terms of assembly, heterodimer of AddA and AddB/RexB. Mg(2+) is required as a cofactor.

It catalyses the reaction Couples ATP hydrolysis with the unwinding of duplex DNA by translocating in the 3'-5' direction.. The catalysed reaction is ATP + H2O = ADP + phosphate + H(+). In terms of biological role, the heterodimer acts as both an ATP-dependent DNA helicase and an ATP-dependent, dual-direction single-stranded exonuclease. Recognizes the chi site generating a DNA molecule suitable for the initiation of homologous recombination. The AddA nuclease domain is required for chi fragment generation; this subunit has the helicase and 3' -&gt; 5' nuclease activities. This Streptococcus pyogenes serotype M6 (strain ATCC BAA-946 / MGAS10394) protein is ATP-dependent helicase/nuclease subunit A.